The chain runs to 521 residues: GMP synthase [glutamine-hydrolyzing] (521 aa).

Positions Lys-8 to Leu-203 constitute a Glutamine amidotransferase type-1 domain. Cys-85 functions as the Nucleophile in the catalytic mechanism. Catalysis depends on residues His-177 and Glu-179. Positions Trp-204–Arg-396 constitute a GMPS ATP-PPase domain. Ser-231–Ser-237 serves as a coordination point for ATP.

Homodimer.

It catalyses the reaction XMP + L-glutamine + ATP + H2O = GMP + L-glutamate + AMP + diphosphate + 2 H(+). Its pathway is purine metabolism; GMP biosynthesis; GMP from XMP (L-Gln route): step 1/1. Catalyzes the synthesis of GMP from XMP. This Stenotrophomonas maltophilia (strain R551-3) protein is GMP synthase [glutamine-hydrolyzing].